Reading from the N-terminus, the 83-residue chain is Beta-toxin Ct25 (83 aa).

Residues 1-18 form the signal peptide; it reads MKVLILIIASVLLIGVEC. The LCN-type CS-alpha/beta domain occupies 19–81; it reads KDGYPKNSEG…VWDSATNKCG (63 aa). 4 disulfides stabilise this stretch: Cys29–Cys80, Cys33–Cys54, Cys40–Cys61, and Cys44–Cys63. Gly81 carries the post-translational modification Glycine amide.

It belongs to the long (4 C-C) scorpion toxin superfamily. Sodium channel inhibitor family. Beta subfamily. Expressed by the venom gland.

The protein localises to the secreted. In terms of biological role, beta toxins bind voltage-independently at site-4 of sodium channels (Nav) and shift the voltage of activation toward more negative potentials thereby affecting sodium channel activation and promoting spontaneous and repetitive firing. The chain is Beta-toxin Ct25 from Centruroides tecomanus (Scorpion).